We begin with the raw amino-acid sequence, 248 residues long: tRNA pseudouridine synthase A 2 (248 aa).

D55 serves as the catalytic Nucleophile. Residue Y113 participates in substrate binding.

The protein belongs to the tRNA pseudouridine synthase TruA family. In terms of assembly, homodimer.

The enzyme catalyses uridine(38/39/40) in tRNA = pseudouridine(38/39/40) in tRNA. In terms of biological role, formation of pseudouridine at positions 38, 39 and 40 in the anticodon stem and loop of transfer RNAs. This Clostridium tetani (strain Massachusetts / E88) protein is tRNA pseudouridine synthase A 2.